We begin with the raw amino-acid sequence, 346 residues long: NADH-ubiquinone oxidoreductase chain 2 (346 aa).

11 helical membrane passes run 1–21, 25–45, 60–80, 95–115, 124–144, 149–169, 178–195, 200–219, 242–262, 274–294, and 326–346; these read MNPH…TITI, HWVL…PLIS, FLTQ…NAWA, CLLL…HFWF, LMTA…LLLM, LNPA…GWMG, ILAF…IILV, LALL…FMAL, ATLM…GFMP, EMTP…FFYL, and AILA…HAIV.

This sequence belongs to the complex I subunit 2 family.

The protein localises to the mitochondrion inner membrane. It catalyses the reaction a ubiquinone + NADH + 5 H(+)(in) = a ubiquinol + NAD(+) + 4 H(+)(out). Functionally, core subunit of the mitochondrial membrane respiratory chain NADH dehydrogenase (Complex I) that is believed to belong to the minimal assembly required for catalysis. Complex I functions in the transfer of electrons from NADH to the respiratory chain. The immediate electron acceptor for the enzyme is believed to be ubiquinone. This is NADH-ubiquinone oxidoreductase chain 2 (MT-ND2) from Mareca penelope (Eurasian wigeon).